Here is a 336-residue protein sequence, read N- to C-terminus: Syntaxin-31 (336 aa).

Topologically, residues 1–314 (MGSTFRDRTV…QHLTRISSNR (314 aa)) are cytoplasmic. 2 disordered regions span residues 23–53 (GAIPSVHQDEDDPASSKRSSPGSEFNKKASR) and 152–218 (RSEN…SQLR). The span at 154–163 (ENMKAHENRK) shows a compositional bias: basic and acidic residues. The segment covering 164 to 181 (QLFSTKNAVDSPPQNNAK) has biased composition (polar residues). A compositionally biased stretch (low complexity) spans 190–202 (SSSSNPFGNLQQP). In terms of domain architecture, t-SNARE coiled-coil homology spans 244–306 (ENYSQSRAVA…EGARSALLQH (63 aa)). A helical; Anchor for type IV membrane protein transmembrane segment spans residues 315 to 335 (WLMMKIFAVIILFLIVFLFFV). Position 336 (A336) is a topological domain, vesicular.

Belongs to the syntaxin family. As to quaternary structure, part of the t-SNARE complex. Interacts with CDC48A, but not with VPS45.

It localises to the golgi apparatus. It is found in the cis-Golgi network membrane. The protein resides in the cytoplasm. The protein localises to the endosome. In terms of biological role, vesicle trafficking protein that functions in the secretory pathway. The chain is Syntaxin-31 (SYP31) from Arabidopsis thaliana (Mouse-ear cress).